Here is a 341-residue protein sequence, read N- to C-terminus: ATPase GET3 (341 aa).

ATP is bound at residue 34 to 41; the sequence is KGGVGKTT. The active site involves Asp-63. ATP is bound by residues Glu-245 and Asn-272. 2 residues coordinate Zn(2+): Cys-283 and Cys-286.

This sequence belongs to the arsA ATPase family. As to quaternary structure, homodimer.

It localises to the cytoplasm. It is found in the endoplasmic reticulum. Functionally, ATPase required for the post-translational delivery of tail-anchored (TA) proteins to the endoplasmic reticulum. Recognizes and selectively binds the transmembrane domain of TA proteins in the cytosol. This complex then targets to the endoplasmic reticulum by membrane-bound receptors, where the tail-anchored protein is released for insertion. This process is regulated by ATP binding and hydrolysis. ATP binding drives the homodimer towards the closed dimer state, facilitating recognition of newly synthesized TA membrane proteins. ATP hydrolysis is required for insertion. Subsequently, the homodimer reverts towards the open dimer state, lowering its affinity for the membrane-bound receptor, and returning it to the cytosol to initiate a new round of targeting. The protein is ATPase GET3 of Ajellomyces capsulatus (strain G186AR / H82 / ATCC MYA-2454 / RMSCC 2432) (Darling's disease fungus).